The following is a 532-amino-acid chain: CTP synthase (532 aa).

The tract at residues 1-267 (MAKFVFVTGG…HGLVLDQLQI (267 aa)) is amidoligase domain. Ser-13 serves as a coordination point for CTP. Residue Ser-13 coordinates UTP. 14–19 (GLGKGI) serves as a coordination point for ATP. Tyr-54 contributes to the L-glutamine binding site. ATP is bound at residue Asp-71. The Mg(2+) site is built by Asp-71 and Glu-141. CTP-binding positions include 148–150 (DIE), 188–193 (KTKPIQ), and Lys-224. UTP-binding positions include 188–193 (KTKPIQ) and Lys-224. The Glutamine amidotransferase type-1 domain occupies 292-532 (EVTFVGKYIE…GFVEAIVNNK (241 aa)). Residue Gly-354 participates in L-glutamine binding. The active-site Nucleophile; for glutamine hydrolysis is Cys-381. Residues 382 to 385 (LGMQ), Glu-405, and Arg-462 each bind L-glutamine. Residues His-507 and Glu-509 contribute to the active site.

It belongs to the CTP synthase family. Homotetramer.

The enzyme catalyses UTP + L-glutamine + ATP + H2O = CTP + L-glutamate + ADP + phosphate + 2 H(+). The catalysed reaction is L-glutamine + H2O = L-glutamate + NH4(+). It carries out the reaction UTP + NH4(+) + ATP = CTP + ADP + phosphate + 2 H(+). The protein operates within pyrimidine metabolism; CTP biosynthesis via de novo pathway; CTP from UDP: step 2/2. Allosterically activated by GTP, when glutamine is the substrate; GTP has no effect on the reaction when ammonia is the substrate. The allosteric effector GTP functions by stabilizing the protein conformation that binds the tetrahedral intermediate(s) formed during glutamine hydrolysis. Inhibited by the product CTP, via allosteric rather than competitive inhibition. In terms of biological role, catalyzes the ATP-dependent amination of UTP to CTP with either L-glutamine or ammonia as the source of nitrogen. Regulates intracellular CTP levels through interactions with the four ribonucleotide triphosphates. The sequence is that of CTP synthase from Mesoplasma florum (strain ATCC 33453 / NBRC 100688 / NCTC 11704 / L1) (Acholeplasma florum).